Consider the following 486-residue polypeptide: Cardiolipin synthase A (486 aa).

A run of 2 helical transmembrane segments spans residues 3–23 (TVYT…IAGV) and 38–58 (MAWL…YLAV). PLD phosphodiesterase domains are found at residues 219-246 (MDLR…VDPR) and 399-426 (EGGL…DMRS). Residues histidine 224, lysine 226, aspartate 231, histidine 404, lysine 406, and aspartate 411 contribute to the active site.

It belongs to the phospholipase D family. Cardiolipin synthase subfamily. ClsA sub-subfamily.

Its subcellular location is the cell inner membrane. It carries out the reaction 2 a 1,2-diacyl-sn-glycero-3-phospho-(1'-sn-glycerol) = a cardiolipin + glycerol. Functionally, catalyzes the reversible phosphatidyl group transfer from one phosphatidylglycerol molecule to another to form cardiolipin (CL) (diphosphatidylglycerol) and glycerol. In Shigella flexneri, this protein is Cardiolipin synthase A.